Here is a 255-residue protein sequence, read N- to C-terminus: uncharacterized protein (255 aa).

Positions 1–28 are cleaved as a signal peptide; it reads MFKLNFKNNYKVLTLLFSLTLSMFVSNA. 3 N-linked (GlcNAc...) asparagine glycosylation sites follow: N38, N61, and N83.

It is found in the secreted. This is an uncharacterized protein from Dictyostelium discoideum (Social amoeba).